A 325-amino-acid chain; its full sequence is Golgi to ER traffic protein 4 homolog A (325 aa).

2 disordered regions span residues 1–22 (MAAA…GGVQ) and 306–325 (SGED…IELD). Residues 307–317 (GEDDDVEDGQE) are compositionally biased toward acidic residues.

It belongs to the GET4 family. Component of the bag6/bat3 complex.

The protein localises to the cytoplasm. Its subcellular location is the cytosol. Functionally, as part of a cytosolic protein quality control complex, the bag6/bat3 complex, maintains misfolded and hydrophobic patches-containing proteins in a soluble state and participates in their proper delivery to the endoplasmic reticulum or alternatively can promote their sorting to the proteasome where they undergo degradation. The bag6/bat3 complex is involved in the post-translational delivery of tail-anchored/type II transmembrane proteins to the endoplasmic reticulum membrane. Similarly, the bag6/bat3 complex also functions as a sorting platform for proteins of the secretory pathway that are mislocalized to the cytosol either delivering them to the proteasome for degradation or to the endoplasmic reticulum. The bag6/bat3 complex also plays a role in the endoplasmic reticulum-associated degradation (ERAD), a quality control mechanism that eliminates unwanted proteins of the endoplasmic reticulum through their retrotranslocation to the cytosol and their targeting to the proteasome. It maintains these retrotranslocated proteins in an unfolded yet soluble state condition in the cytosol to ensure their proper delivery to the proteasome. The polypeptide is Golgi to ER traffic protein 4 homolog A (get4-a) (Xenopus laevis (African clawed frog)).